A 69-amino-acid chain; its full sequence is DNA-directed RNA polymerase subunit epsilon (69 aa).

Belongs to the RNA polymerase subunit epsilon family. In terms of assembly, RNAP is composed of a core of 2 alpha, a beta and a beta' subunit. The core is associated with a delta subunit, and at least one of epsilon or omega. When a sigma factor is associated with the core the holoenzyme is formed, which can initiate transcription.

It carries out the reaction RNA(n) + a ribonucleoside 5'-triphosphate = RNA(n+1) + diphosphate. Functionally, a non-essential component of RNA polymerase (RNAP). This Bacillus velezensis (strain DSM 23117 / BGSC 10A6 / LMG 26770 / FZB42) (Bacillus amyloliquefaciens subsp. plantarum) protein is DNA-directed RNA polymerase subunit epsilon.